Reading from the N-terminus, the 387-residue chain is Exodeoxyribonuclease 7 large subunit (387 aa).

Belongs to the XseA family. In terms of assembly, heterooligomer composed of large and small subunits.

The protein localises to the cytoplasm. It catalyses the reaction Exonucleolytic cleavage in either 5'- to 3'- or 3'- to 5'-direction to yield nucleoside 5'-phosphates.. Its function is as follows. Bidirectionally degrades single-stranded DNA into large acid-insoluble oligonucleotides, which are then degraded further into small acid-soluble oligonucleotides. The polypeptide is Exodeoxyribonuclease 7 large subunit (Campylobacter hominis (strain ATCC BAA-381 / DSM 21671 / CCUG 45161 / LMG 19568 / NCTC 13146 / CH001A)).